The chain runs to 157 residues: Peptide methionine sulfoxide reductase MsrA (157 aa).

Cys-10 is an active-site residue.

This sequence belongs to the MsrA Met sulfoxide reductase family.

The enzyme catalyses L-methionyl-[protein] + [thioredoxin]-disulfide + H2O = L-methionyl-(S)-S-oxide-[protein] + [thioredoxin]-dithiol. It catalyses the reaction [thioredoxin]-disulfide + L-methionine + H2O = L-methionine (S)-S-oxide + [thioredoxin]-dithiol. In terms of biological role, has an important function as a repair enzyme for proteins that have been inactivated by oxidation. Catalyzes the reversible oxidation-reduction of methionine sulfoxide in proteins to methionine. This Clostridium botulinum (strain Kyoto / Type A2) protein is Peptide methionine sulfoxide reductase MsrA.